Consider the following 232-residue polypeptide: Ion-translocating oxidoreductase complex subunit E (232 aa).

The next 5 membrane-spanning stretches (helical) occupy residues 39–59 (LGLG…ISLV), 69–89 (IPVF…LVNA), 93–113 (GLYM…IIIG), 128–148 (AFDG…LGAT), and 182–202 (SFLL…LIAL).

The protein belongs to the NqrDE/RnfAE family. As to quaternary structure, the complex is composed of six subunits: RnfA, RnfB, RnfC, RnfD, RnfE and RnfG.

It is found in the cell inner membrane. Part of a membrane-bound complex that couples electron transfer with translocation of ions across the membrane. This chain is Ion-translocating oxidoreductase complex subunit E, found in Shewanella oneidensis (strain ATCC 700550 / JCM 31522 / CIP 106686 / LMG 19005 / NCIMB 14063 / MR-1).